The following is a 240-amino-acid chain: 1-(5-phosphoribosyl)-5-[(5-phosphoribosylamino)methylideneamino] imidazole-4-carboxamide isomerase (240 aa).

Residue D8 is the Proton acceptor of the active site. The Proton donor role is filled by D129.

Belongs to the HisA/HisF family.

It is found in the cytoplasm. It carries out the reaction 1-(5-phospho-beta-D-ribosyl)-5-[(5-phospho-beta-D-ribosylamino)methylideneamino]imidazole-4-carboxamide = 5-[(5-phospho-1-deoxy-D-ribulos-1-ylimino)methylamino]-1-(5-phospho-beta-D-ribosyl)imidazole-4-carboxamide. The protein operates within amino-acid biosynthesis; L-histidine biosynthesis; L-histidine from 5-phospho-alpha-D-ribose 1-diphosphate: step 4/9. The protein is 1-(5-phosphoribosyl)-5-[(5-phosphoribosylamino)methylideneamino] imidazole-4-carboxamide isomerase of Dinoroseobacter shibae (strain DSM 16493 / NCIMB 14021 / DFL 12).